The chain runs to 240 residues: Mannosyl-D-glycerate transport/metabolism system repressor MngR (240 aa).

In terms of domain architecture, HTH gntR-type spans 4–72; the sequence is KPLYRQIADR…QGSGTYVKEE (69 aa). The segment at residues 32–51 is a DNA-binding region (H-T-H motif); sequence ESALQTEFGVSRVTVRQALR.

In terms of biological role, represses mngA and mngB. Regulates its own expression. The polypeptide is Mannosyl-D-glycerate transport/metabolism system repressor MngR (mngR) (Escherichia coli (strain K12)).